The sequence spans 63 residues: Large ribosomal subunit protein uL29 (63 aa).

The protein belongs to the universal ribosomal protein uL29 family.

The sequence is that of Large ribosomal subunit protein uL29 from Tolumonas auensis (strain DSM 9187 / NBRC 110442 / TA 4).